The chain runs to 156 residues: UPF0232 protein BL0636 (156 aa).

This sequence belongs to the UPF0232 family.

In Bifidobacterium longum (strain NCC 2705), this protein is UPF0232 protein BL0636.